Reading from the N-terminus, the 362-residue chain is Peptide chain release factor 1 (362 aa).

Glutamine 237 is modified (N5-methylglutamine).

Belongs to the prokaryotic/mitochondrial release factor family. Post-translationally, methylated by PrmC. Methylation increases the termination efficiency of RF1.

Its subcellular location is the cytoplasm. Functionally, peptide chain release factor 1 directs the termination of translation in response to the peptide chain termination codons UAG and UAA. The protein is Peptide chain release factor 1 (prfA) of Aquifex aeolicus (strain VF5).